We begin with the raw amino-acid sequence, 210 residues long: Large ribosomal subunit protein bL25 (210 aa).

Residues 179–210 (LPPQQEEEIHSGEQQEPGHPDAEEGRETTPES) are disordered. Over residues 185 to 210 (EEIHSGEQQEPGHPDAEEGRETTPES) the composition is skewed to basic and acidic residues.

The protein belongs to the bacterial ribosomal protein bL25 family. CTC subfamily. Part of the 50S ribosomal subunit; part of the 5S rRNA/L5/L18/L25 subcomplex. Contacts the 5S rRNA. Binds to the 5S rRNA independently of L5 and L18.

Functionally, this is one of the proteins that binds to the 5S RNA in the ribosome where it forms part of the central protuberance. This chain is Large ribosomal subunit protein bL25, found in Geobacillus sp. (strain WCH70).